A 450-amino-acid polypeptide reads, in one-letter code: Phosphoglucosamine mutase 2 (450 aa).

S101 functions as the Phosphoserine intermediate in the catalytic mechanism. 4 residues coordinate Mg(2+): S101, D245, D247, and D249. The residue at position 101 (S101) is a Phosphoserine.

It belongs to the phosphohexose mutase family. Mg(2+) is required as a cofactor. Post-translationally, activated by phosphorylation.

It carries out the reaction alpha-D-glucosamine 1-phosphate = D-glucosamine 6-phosphate. Catalyzes the conversion of glucosamine-6-phosphate to glucosamine-1-phosphate. In Shewanella sp. (strain MR-4), this protein is Phosphoglucosamine mutase 2.